We begin with the raw amino-acid sequence, 257 residues long: Pyridoxine 5'-phosphate synthase (257 aa).

Residue Asn-6 coordinates 3-amino-2-oxopropyl phosphate. Residue Asp-8 to His-9 participates in 1-deoxy-D-xylulose 5-phosphate binding. Arg-17 is a binding site for 3-amino-2-oxopropyl phosphate. His-41 serves as the catalytic Proton acceptor. The 1-deoxy-D-xylulose 5-phosphate site is built by Arg-43 and His-48. Catalysis depends on Glu-68, which acts as the Proton acceptor. Thr-98 provides a ligand contact to 1-deoxy-D-xylulose 5-phosphate. His-210 serves as the catalytic Proton donor. 3-amino-2-oxopropyl phosphate contacts are provided by residues Gly-211 and Gly-232–Gln-233.

It belongs to the PNP synthase family. Homooctamer; tetramer of dimers.

The protein resides in the cytoplasm. It carries out the reaction 3-amino-2-oxopropyl phosphate + 1-deoxy-D-xylulose 5-phosphate = pyridoxine 5'-phosphate + phosphate + 2 H2O + H(+). Its pathway is cofactor biosynthesis; pyridoxine 5'-phosphate biosynthesis; pyridoxine 5'-phosphate from D-erythrose 4-phosphate: step 5/5. In terms of biological role, catalyzes the complicated ring closure reaction between the two acyclic compounds 1-deoxy-D-xylulose-5-phosphate (DXP) and 3-amino-2-oxopropyl phosphate (1-amino-acetone-3-phosphate or AAP) to form pyridoxine 5'-phosphate (PNP) and inorganic phosphate. The sequence is that of Pyridoxine 5'-phosphate synthase from Campylobacter jejuni (strain RM1221).